The following is a 268-amino-acid chain: Ribosomal RNA small subunit methyltransferase A (268 aa).

S-adenosyl-L-methionine is bound by residues asparagine 18, leucine 20, glycine 45, glutamate 66, aspartate 91, and asparagine 112.

The protein belongs to the class I-like SAM-binding methyltransferase superfamily. rRNA adenine N(6)-methyltransferase family. RsmA subfamily.

It is found in the cytoplasm. It catalyses the reaction adenosine(1518)/adenosine(1519) in 16S rRNA + 4 S-adenosyl-L-methionine = N(6)-dimethyladenosine(1518)/N(6)-dimethyladenosine(1519) in 16S rRNA + 4 S-adenosyl-L-homocysteine + 4 H(+). Functionally, specifically dimethylates two adjacent adenosines (A1518 and A1519) in the loop of a conserved hairpin near the 3'-end of 16S rRNA in the 30S particle. May play a critical role in biogenesis of 30S subunits. The sequence is that of Ribosomal RNA small subunit methyltransferase A from Pseudoalteromonas translucida (strain TAC 125).